The chain runs to 313 residues: Homoserine O-succinyltransferase (313 aa).

The active-site Acyl-thioester intermediate is Cys142. Substrate is bound by residues Lys163 and Ser192. Residue His235 is the Proton acceptor of the active site. Glu237 is an active-site residue. Position 249 (Arg249) interacts with substrate.

It belongs to the MetA family.

Its subcellular location is the cytoplasm. It carries out the reaction L-homoserine + succinyl-CoA = O-succinyl-L-homoserine + CoA. It functions in the pathway amino-acid biosynthesis; L-methionine biosynthesis via de novo pathway; O-succinyl-L-homoserine from L-homoserine: step 1/1. Transfers a succinyl group from succinyl-CoA to L-homoserine, forming succinyl-L-homoserine. In Shewanella sp. (strain ANA-3), this protein is Homoserine O-succinyltransferase.